The following is a 438-amino-acid chain: Neutral metalloprotease ShpI (438 aa).

Positions 1-26 (MINKKKLVTSLVTSSLLATFTLGSFA) are cleaved as a signal peptide. The propeptide occupies 27 to 101 (DAHTYIINNE…KSENALSNSK (75 aa)). Residue His-242 participates in Zn(2+) binding. The active site involves Glu-243. Positions 246 and 269 each coordinate Zn(2+).

Belongs to the peptidase M30 family. The cofactor is Zn(2+). Several different N-terminal ends may be produced, the favored N-terminus is position 102.

Its subcellular location is the secreted. Inhibited by metal- and zinc-specific inhibitors, such as EDTA and 1,10-phenanthroline in vitro. Is resistant to all inhibitors of serine, cysteine and aspartic proteases. Its function is as follows. Protease that has a low substrate specificity. Catalyzes the hydrolysis of glucagon, melittin and oxidized beta-insulin at various positions in vitro. Is not able to cleave elastin or the synthetic substrates FAGLA (a substrate for neutral proteinases) and FALGPA (a substrate for collagenase). This chain is Neutral metalloprotease ShpI, found in Staphylococcus hyicus.